The following is a 477-amino-acid chain: Aspartyl/glutamyl-tRNA(Asn/Gln) amidotransferase subunit B (477 aa).

It belongs to the GatB/GatE family. GatB subfamily. In terms of assembly, heterotrimer of A, B and C subunits.

The enzyme catalyses L-glutamyl-tRNA(Gln) + L-glutamine + ATP + H2O = L-glutaminyl-tRNA(Gln) + L-glutamate + ADP + phosphate + H(+). It catalyses the reaction L-aspartyl-tRNA(Asn) + L-glutamine + ATP + H2O = L-asparaginyl-tRNA(Asn) + L-glutamate + ADP + phosphate + 2 H(+). Allows the formation of correctly charged Asn-tRNA(Asn) or Gln-tRNA(Gln) through the transamidation of misacylated Asp-tRNA(Asn) or Glu-tRNA(Gln) in organisms which lack either or both of asparaginyl-tRNA or glutaminyl-tRNA synthetases. The reaction takes place in the presence of glutamine and ATP through an activated phospho-Asp-tRNA(Asn) or phospho-Glu-tRNA(Gln). The sequence is that of Aspartyl/glutamyl-tRNA(Asn/Gln) amidotransferase subunit B from Sulfurovum sp. (strain NBC37-1).